The following is a 417-amino-acid chain: Serine/threonine-protein phosphatase 4 regulatory subunit 2 (417 aa).

Polar residues-rich tracts occupy residues 140–149 (EKNNSSSLNR), 158–170 (NSPS…NING), and 186–196 (APMTTNGLPES). The segment at 140–417 (EKNNSSSLNR…EVTDEPMEQD (278 aa)) is disordered. Position 159 is a phosphoserine (Ser159). Basic and acidic residues predominate over residues 197–213 (TDSKEANLQQNEEKSHS). Positions 214 to 226 (DSSTSESEVSSVS) are enriched in low complexity. Ser226 is modified (phosphoserine). Positions 231 to 258 (KHPDEDAVEAEGHEVKRLRFDKEGEVRE) are enriched in basic and acidic residues. Polar residues predominate over residues 259–269 (TASQTTSSEIS). A compositionally biased stretch (basic and acidic residues) spans 283–297 (QDKDKDSRCTRQHCT). Over residues 298 to 311 (EEDEEEDEEEEEES) the composition is skewed to acidic residues. Basic and acidic residues predominate over residues 318-327 (MIPERKNQEK). The segment covering 338–350 (ETSEENNQMEESD) has biased composition (acidic residues). Positions 353–363 (QAEKDLLHSEG) are enriched in basic and acidic residues. Over residues 385-399 (GSNSSKTGEILSESS) the composition is skewed to polar residues. The segment covering 400–417 (MENDDEATEVTDEPMEQD) has biased composition (acidic residues).

This sequence belongs to the PPP4R2 family. In terms of assembly, serine/threonine-protein phosphatase 4 (PP4) occurs in different assemblies of the catalytic and one or more regulatory subunits. Component of the PP4 complexes PPP4C-PPP4R2, PPP4C-PPP4R2-PPP4R3A and PPP4C-PPP4R2-PPP4R3B. The PPP4C-PPP4R2 complex appears to be a tetramer composed of 2 molecules of PPP4C and 2 molecules of PPP4R2. Interacts with DDX20/GEMIN3 and GEMIN4. Interacts with RPA2; this DNA damage-dependent interaction recruits PPP4C leading to RPA2 dephosphorylation.

The protein resides in the cytoplasm. It localises to the cytoskeleton. It is found in the microtubule organizing center. The protein localises to the centrosome. Its subcellular location is the nucleus. Functionally, regulatory subunit of serine/threonine-protein phosphatase 4 (PP4). May regulate the activity of PPP4C at centrosomal microtubule organizing centers. Its interaction with the SMN complex leads to enhance the temporal localization of snRNPs, suggesting a role of PPP4C in maturation of spliceosomal snRNPs. The PPP4C-PPP4R2-PPP4R3A PP4 complex specifically dephosphorylates H2AX phosphorylated on 'Ser-140' (gamma-H2AX) generated during DNA replication and required for DNA double strand break repair. Mediates RPA2 dephosphorylation by recruiting PPP4C to RPA2 in a DNA damage-dependent manner. RPA2 dephosphorylation is required for the efficient RPA2-mediated recruitment of RAD51 to chromatin following double strand breaks, an essential step for DNA repair. This chain is Serine/threonine-protein phosphatase 4 regulatory subunit 2 (PPP4R2), found in Pongo abelii (Sumatran orangutan).